The following is a 521-amino-acid chain: Envelope glycoprotein (521 aa).

The N-terminal stretch at M1–Q20 is a signal peptide. N-linked (GlcNAc...) asparagine; by host glycans are attached at residues N44, N158, N189, and N396. A helical transmembrane segment spans residues I501–M517.

Homooligomer; disulfide-linked (possibly homodimer).

The protein localises to the virion membrane. In terms of biological role, attaches the virus to host cellular receptor and later induces fusion of virion with host membrane. The protein is Envelope glycoprotein (P4) of Dhori virus (strain Indian/1313/61) (Dho).